The chain runs to 377 residues: Trichodiene synthase (377 aa).

It belongs to the trichodiene synthase family.

It carries out the reaction (2E,6E)-farnesyl diphosphate = trichodiene + diphosphate. It participates in sesquiterpene biosynthesis; trichothecene biosynthesis. In terms of biological role, TS is a member of the terpene cyclase group of enzymes. It catalyzes the isomerization and cyclization of farnesyl pyro-phosphate to form trichodiene, the first cyclic intermediate in the biosynthetic pathway for trichothecenes. It serves to branch trichothecene biosynthesis from the isoprenoid pathway. This chain is Trichodiene synthase (TRI5), found in Fusarium poae.